The primary structure comprises 65 residues: Probable tautomerase RSp1151 (65 aa).

Pro-2 functions as the Proton acceptor; via imino nitrogen in the catalytic mechanism.

Belongs to the 4-oxalocrotonate tautomerase family.

This is Probable tautomerase RSp1151 from Ralstonia nicotianae (strain ATCC BAA-1114 / GMI1000) (Ralstonia solanacearum).